The primary structure comprises 316 residues: Transaldolase (316 aa).

Catalysis depends on Lys-127, which acts as the Schiff-base intermediate with substrate.

Belongs to the transaldolase family. Type 2 subfamily.

It localises to the cytoplasm. It catalyses the reaction D-sedoheptulose 7-phosphate + D-glyceraldehyde 3-phosphate = D-erythrose 4-phosphate + beta-D-fructose 6-phosphate. Its pathway is carbohydrate degradation; pentose phosphate pathway; D-glyceraldehyde 3-phosphate and beta-D-fructose 6-phosphate from D-ribose 5-phosphate and D-xylulose 5-phosphate (non-oxidative stage): step 2/3. Transaldolase is important for the balance of metabolites in the pentose-phosphate pathway. This Helicobacter pylori (strain Shi470) protein is Transaldolase.